The chain runs to 121 residues: Large ribosomal subunit protein uL24 (121 aa).

The interval Met1–Ala30 is disordered.

It belongs to the universal ribosomal protein uL24 family. As to quaternary structure, part of the 50S ribosomal subunit.

In terms of biological role, one of two assembly initiator proteins, it binds directly to the 5'-end of the 23S rRNA, where it nucleates assembly of the 50S subunit. Functionally, located at the polypeptide exit tunnel on the outside of the subunit. This Methanoculleus marisnigri (strain ATCC 35101 / DSM 1498 / JR1) protein is Large ribosomal subunit protein uL24.